A 155-amino-acid polypeptide reads, in one-letter code: Small ribosomal subunit protein bS6 (155 aa).

The interval 94-155 is disordered; it reads EKHEEGPSAM…RPRRPREDRV (62 aa).

Belongs to the bacterial ribosomal protein bS6 family.

Its function is as follows. Binds together with bS18 to 16S ribosomal RNA. In Rhizobium johnstonii (strain DSM 114642 / LMG 32736 / 3841) (Rhizobium leguminosarum bv. viciae), this protein is Small ribosomal subunit protein bS6.